The following is a 190-amino-acid chain: Putative histone H1.6 (190 aa).

The interval 1-29 is disordered; it reads MSDVAVAETPAVKTPTKAPKANATKVPKV. Ser2 is subject to N-acetylserine. Low complexity predominate over residues 9–29; that stretch reads TPAVKTPTKAPKANATKVPKV. In terms of domain architecture, H15 spans 34 to 110; that stretch reads AHPPFINMVT…GATGRFRVAE (77 aa). The tract at residues 141 to 190 is disordered; that stretch reads KKTGDKVKKAKSPKKIAKPAAKKATKSPSKKVAPKKAAAKPAKKTAALKA. Residues 148–183 show a composition bias toward basic residues; it reads KKAKSPKKIAKPAAKKATKSPSKKVAPKKAAAKPAK.

Belongs to the histone H1/H5 family.

Its subcellular location is the nucleus. It localises to the chromosome. Histones H1 are necessary for the condensation of nucleosome chains into higher-order structures. This Caenorhabditis elegans protein is Putative histone H1.6 (hil-6).